The sequence spans 314 residues: MAIKRRKISVIGSGFTGATTALMVAQKELGDVVLLDIPNMEGPTKGKALDMLESTPVQGVDSTITGTSSYEDTKDSDVVVITAGIARKPGMSRDDLVATNAKIMKSVTKEVVKYSPNSYIIVLTNPADAMTYTVYKESGFPKNRVIGQSGVLDTARFRTFVAQELNVSVEDVTGFVLGGHGDDMVPLIRYSAAGGVPLTKLIAPERIEEIVERTRKGGGEIVGLLGNGSAYYAPAASLTQMVEAILKDKKRIIPTIAYLEGEYGQHDLYLGVPTILGGDGIEKVIELDLTEEEKAQLDKSVQSVRNVMAALPAE.

NAD(+) contacts are provided by residues 12–17 (GSGFTG) and Asp36. 2 residues coordinate substrate: Arg87 and Arg93. NAD(+) contacts are provided by residues Asn100 and 123-125 (LTN). Asn125 contacts substrate. Ser149 is subject to Phosphoserine. Arg156 serves as a coordination point for substrate. His180 (proton acceptor) is an active-site residue.

It belongs to the LDH/MDH superfamily. MDH type 3 family.

It catalyses the reaction (S)-malate + NAD(+) = oxaloacetate + NADH + H(+). Catalyzes the reversible oxidation of malate to oxaloacetate. The sequence is that of Malate dehydrogenase from Shouchella clausii (strain KSM-K16) (Alkalihalobacillus clausii).